A 374-amino-acid polypeptide reads, in one-letter code: DNA replication and repair protein RecF (374 aa).

Residue 30–37 (GHNAQGKT) participates in ATP binding.

The protein belongs to the RecF family.

Its subcellular location is the cytoplasm. In terms of biological role, the RecF protein is involved in DNA metabolism; it is required for DNA replication and normal SOS inducibility. RecF binds preferentially to single-stranded, linear DNA. It also seems to bind ATP. The chain is DNA replication and repair protein RecF from Limosilactobacillus reuteri (strain DSM 20016) (Lactobacillus reuteri).